The sequence spans 131 residues: Large ribosomal subunit protein bL19 (131 aa).

This sequence belongs to the bacterial ribosomal protein bL19 family.

In terms of biological role, this protein is located at the 30S-50S ribosomal subunit interface and may play a role in the structure and function of the aminoacyl-tRNA binding site. This Rhodopseudomonas palustris (strain BisB18) protein is Large ribosomal subunit protein bL19.